We begin with the raw amino-acid sequence, 745 residues long: Immunoglobulin superfamily containing leucine-rich repeat protein 2 (745 aa).

A signal peptide spans 1-19 (MGPFGALCLAWALLGVVRA). Positions 20–51 (CPEPCACVDKYAHQFADCAYKELREVPEGLPA) constitute an LRRNT domain. The Extracellular portion of the chain corresponds to 20–589 (CPEPCACVDK…VFSTKKELPS (570 aa)). Residues N52 and N73 are each glycosylated (N-linked (GlcNAc...) asparagine). LRR repeat units follow at residues 52-73 (NVTT…AFVN), 76-97 (QVTS…ALAV), 100-123 (QLKN…RNLS), 124-145 (ALQL…ALGA), and 148-169 (DLRS…TFDA). N-linked (GlcNAc...) asparagine glycosylation is present at N121. The LRRCT domain maps to 181–232 (NPFHCSCGLVWLQAWAASTRVSLPEPDSIACASPPELQGVPVHRLPALPCAP). The 140-residue stretch at 233 to 372 (PSVRLSAEPP…GTNSTSLRVT (140 aa)) folds into the Ig-like domain. Residues C260 and C356 are joined by a disulfide bond. The span at 290–300 (KEEDGGDKVED) shows a compositional bias: basic and acidic residues. Positions 290–328 (KEEDGGDKVEDGEGDGDEDLPTQTEAPTPTPAPAWPAPP) are disordered. A compositionally biased stretch (pro residues) spans 317–328 (TPTPAPAWPAPP). Residues N338 and N365 are each glycosylated (N-linked (GlcNAc...) asparagine). Positions 376–423 (AGPPKHAPGTGEEPDAQVPTSERKATTKGRSNSVLPFKPEGKTKGQGL) are disordered. 2 N-linked (GlcNAc...) asparagine glycosylation sites follow: N474 and N563. The helical transmembrane segment at 590–610 (LLVIVTVSVFLLVLATVPLLG) threads the bilayer. The Cytoplasmic portion of the chain corresponds to 611–745 (AACCHLLAKH…INGNYRQTAG (135 aa)). A disordered region spans residues 654–697 (SEKSYPARGEAGGEEPEEVPEEGLDEDVEQGDPSGDLQREESLA). Positions 665–683 (GGEEPEEVPEEGLDEDVEQ) are enriched in acidic residues. Residue Y719 is modified to Phosphotyrosine. S720 carries the post-translational modification Phosphoserine.

Homomultimer. Interacts with NTRK1/TrkA. At 11.5 dpc, expressed in spinal nerves, their roots and the ventral spinal cord. At 12.5 dpc, detected in the ventral spinal cord, dorsal root ganglia (DRG), dorsal and ventral roots and sympathetic chain ganglia. At 12.5 dpc, expressed in almost all motor neurons which also express RET and in almost all DRG sensory neurons which also express NTRK1. At 18.5 dpc, expressed only in a subset of NTRK1-expressing neurons but still expressed in nearly all RET-expressing neurons.

The protein localises to the cell membrane. In terms of biological role, required for axon extension during neural development. The protein is Immunoglobulin superfamily containing leucine-rich repeat protein 2 (Islr2) of Mus musculus (Mouse).